Here is a 325-residue protein sequence, read N- to C-terminus: MATH domain and coiled-coil domain-containing protein At3g58430 (325 aa).

The region spanning 6 to 131 (HKKFCWIIKN…KGDFKIIAEV (126 aa)) is the MATH domain. The stretch at 258–306 (FKVDWLEKKLDQVKDKKEREQSGLARLHELEEYLLKLKQKCSNLDLLVE) forms a coiled coil.

The protein is MATH domain and coiled-coil domain-containing protein At3g58430 of Arabidopsis thaliana (Mouse-ear cress).